A 153-amino-acid chain; its full sequence is Proline-rich membrane anchor 1 (153 aa).

Residues 1-35 (MLLRDLVPRHGCCWPSLLLHCALHPLWGLVQVTHA) form the signal peptide. Topologically, residues 36 to 92 (EPQKSCSKVTDSCQHICQCRPPPPLPPPPPPPPPPRLLSAPAPNSTSCPAEDSWWSG) are extracellular. Residues 56–70 (PPPPLPPPPPPPPPP) form the PRAD domain. Over residues 59 to 71 (PLPPPPPPPPPPR) the composition is skewed to pro residues. The tract at residues 59–79 (PLPPPPPPPPPPRLLSAPAPN) is disordered. An N-linked (GlcNAc...) asparagine glycan is attached at asparagine 79. Residues 93 to 113 (LVIIVAVVCASLVFLTVLVII) form a helical membrane-spanning segment. The Cytoplasmic segment spans residues 114 to 153 (CYKAIKRKPLRKDENGTSVAEYPMSSSQSHKGVDVNAAVV). A disordered region spans residues 129-153 (GTSVAEYPMSSSQSHKGVDVNAAVV).

In terms of assembly, interacts with ACHE, probably through disulfide bonds. In terms of tissue distribution, predominantly expressed in the central nervous system, including in the brain. Also expressed in muscle, heart and kidney. Isoform 1 may be predominant in the cortex and striatum, while isoform 2 is more abundant in the cerebellum.

Its subcellular location is the cell membrane. It localises to the cell junction. The protein resides in the synapse. Required to anchor acetylcholinesterase (ACHE) to the basal lamina of the neuromuscular junction and to the membrane of neuronal synapses in brain. Also able to organize ACHE into tetramers. This is Proline-rich membrane anchor 1 (Prima1) from Mus musculus (Mouse).